Consider the following 609-residue polypeptide: Phosphoprotein 85 (609 aa).

Residues 461-609 (QNEGRASSRA…RSTETNDERL (149 aa)) are disordered. Over residues 465 to 478 (RASSRASSSHSTST) the composition is skewed to low complexity. Positions 484-495 (PQSGRSTPTSIL) are enriched in polar residues. Low complexity-rich tracts occupy residues 503–513 (SNSRSSSVSFS) and 552–563 (SPQSASSNNSMS). Residues 600-609 (RSTETNDERL) are compositionally biased toward basic and acidic residues.

It belongs to the herpesviridae pp85 family. Post-translationally, phosphorylated.

The protein localises to the virion tegument. Its subcellular location is the host cytoplasm. The polypeptide is Phosphoprotein 85 (U14) (Homo sapiens (Human)).